The following is a 141-amino-acid chain: MNVYFILFLGVFAFIEVNCKSRKSKSLGTCPKLDVSTVCVVDYKFNCLFQKQCPSGYRCCTYGCNRRCAAVTVNKKHLGSCRNSSGKKGKRCKKDKSCKRHEKCCNKRCRRVRKKIAPVRTLSKNSSNSFSFLMKLISINR.

An N-terminal signal peptide occupies residues 1–19 (MNVYFILFLGVFAFIEVNC). Residues 23-71 (KSKSLGTCPKLDVSTVCVVDYKFNCLFQKQCPSGYRCCTYGCNRRCAAV) enclose the WAP domain. Intrachain disulfides connect Cys30–Cys60, Cys39–Cys64, Cys47–Cys59, Cys53–Cys68, Cys81–Cys105, and Cys92–Cys104.

In terms of tissue distribution, component of the organic matrix of calcified shell layers like nacre and prisms.

It is found in the secreted. This chain is Perlwapin-like protein, found in Mytilus galloprovincialis (Mediterranean mussel).